We begin with the raw amino-acid sequence, 66 residues long: Movement protein TGBp3 (66 aa).

Over 1–2 the chain is Lumenal; that stretch reads MD. The chain crosses the membrane as a helical span at residues 3–23; that stretch reads FTTLIIIGVYLLVFIVYFAKI. Topologically, residues 24–66 are cytoplasmic; it reads NTSVCTISISGASIEISGCDNPTLFEILPKLRPFNHGLSLPSN.

The protein belongs to the Tymovirales TGBp3 protein family.

The protein resides in the host endoplasmic reticulum membrane. Plays a role in viral cell-to-cell propagation, by facilitating genome transport to neighboring plant cells through plasmosdesmata. May induce the formation of granular vesicles derived from the Endoplasmic reticulum, which align on actin filaments. In Trifolium (WCMV), this protein is Movement protein TGBp3.